Here is a 712-residue protein sequence, read N- to C-terminus: Ribosome-releasing factor 2, mitochondrial (712 aa).

The N-terminal 28 residues, 1 to 28 (MQYSLLSAQLRCSRFLLRQQAPFINRCY), are a transit peptide targeting the mitochondrion. The tr-type G domain occupies 30 to 309 (DDIRNIGILA…AVNAYLPTPN (280 aa)). GTP-binding positions include 39-46 (AHIDAGKT), 103-107 (DTPGH), and 157-160 (NKMD).

The protein belongs to the TRAFAC class translation factor GTPase superfamily. Classic translation factor GTPase family. EF-G/EF-2 subfamily.

Its subcellular location is the mitochondrion. Its function is as follows. Mitochondrial GTPase that mediates the disassembly of ribosomes from messenger RNA at the termination of mitochondrial protein biosynthesis. Not involved in the GTP-dependent ribosomal translocation step during translation elongation. The sequence is that of Ribosome-releasing factor 2, mitochondrial from Drosophila virilis (Fruit fly).